A 408-amino-acid chain; its full sequence is UPF0754 membrane protein Tery_3973 (408 aa).

The next 2 membrane-spanning stretches (helical) occupy residues I4–I24 and I385–V405.

It belongs to the UPF0754 family.

It is found in the cell inner membrane. This chain is UPF0754 membrane protein Tery_3973, found in Trichodesmium erythraeum (strain IMS101).